The chain runs to 198 residues: FMN-dependent NADH:quinone oxidoreductase (198 aa).

FMN contacts are provided by residues S10, 16 to 18 (SQS), 94 to 97 (MYNF), and 138 to 141 (TRGG).

This sequence belongs to the azoreductase type 1 family. In terms of assembly, homodimer. The cofactor is FMN.

It catalyses the reaction 2 a quinone + NADH + H(+) = 2 a 1,4-benzosemiquinone + NAD(+). It carries out the reaction N,N-dimethyl-1,4-phenylenediamine + anthranilate + 2 NAD(+) = 2-(4-dimethylaminophenyl)diazenylbenzoate + 2 NADH + 2 H(+). Functionally, quinone reductase that provides resistance to thiol-specific stress caused by electrophilic quinones. Also exhibits azoreductase activity. Catalyzes the reductive cleavage of the azo bond in aromatic azo compounds to the corresponding amines. In Shewanella sp. (strain MR-4), this protein is FMN-dependent NADH:quinone oxidoreductase.